Consider the following 249-residue polypeptide: ATP synthase subunit a, chloroplastic (249 aa).

A run of 5 helical transmembrane segments spans residues 40–60, 97–117, 136–156, 201–221, and 222–242; these read QVLI…VLAI, VPFI…GALL, INTT…AGLS, LVVV…VMFL, and GLFT…AYIG.

This sequence belongs to the ATPase A chain family. As to quaternary structure, F-type ATPases have 2 components, CF(1) - the catalytic core - and CF(0) - the membrane proton channel. CF(1) has five subunits: alpha(3), beta(3), gamma(1), delta(1), epsilon(1). CF(0) has four main subunits: a, b, b' and c.

The protein localises to the plastid. The protein resides in the chloroplast thylakoid membrane. In terms of biological role, key component of the proton channel; it plays a direct role in the translocation of protons across the membrane. The sequence is that of ATP synthase subunit a, chloroplastic from Olimarabidopsis pumila (Dwarf rocket).